The primary structure comprises 162 residues: MSSPSPALSHLDESGQIRMVDVGAKSASDRIAIARGAVRMNALAYGLLTQPGQGKGEVLNTARVAAVLAAKRCAELIPLCHSLPLAFVGVDFSLDDATHTVEVRATCRTHYKTGVEMEAMTAASVAALTIYDMCKAADKGIVIEQIRLEYKAGGKSGEWRND.

Substrate-binding positions include 79-81 (LCH) and 117-118 (ME). Aspartate 132 is an active-site residue.

It belongs to the MoaC family. As to quaternary structure, homohexamer; trimer of dimers.

It catalyses the reaction (8S)-3',8-cyclo-7,8-dihydroguanosine 5'-triphosphate = cyclic pyranopterin phosphate + diphosphate. The protein operates within cofactor biosynthesis; molybdopterin biosynthesis. Its function is as follows. Catalyzes the conversion of (8S)-3',8-cyclo-7,8-dihydroguanosine 5'-triphosphate to cyclic pyranopterin monophosphate (cPMP). This Bordetella petrii (strain ATCC BAA-461 / DSM 12804 / CCUG 43448) protein is Cyclic pyranopterin monophosphate synthase.